A 319-amino-acid polypeptide reads, in one-letter code: Cell surface A33 antigen (319 aa).

The N-terminal stretch at 1-21 is a signal peptide; it reads MLGKAGSVVWMLCAIWVAADA. The region spanning 22–134 is the Ig-like V-type domain; the sequence is LTVETTQDIL…QDVNAKSRVR (113 aa). Over 22 to 235 the chain is Extracellular; sequence LTVETTQDIL…VAPRPPSMNI (214 aa). 3 disulfide bridges follow: Cys-43-Cys-117, Cys-146-Cys-222, and Cys-162-Cys-211. N-linked (GlcNAc...) asparagine glycosylation is found at Asn-99, Asn-112, Asn-200, and Asn-223. The 88-residue stretch at 140–227 folds into the Ig-like C2-type domain; it reads PPSKPDCSIQ…GIESCNITVA (88 aa). A helical transmembrane segment spans residues 236–256; it reads ALYAGIAGGVFVALIIIGVIV. The Cytoplasmic portion of the chain corresponds to 257–319; it reads YCCCCREKDD…GRSTPDQPFQ (63 aa). Composition is skewed to basic and acidic residues over residues 267–276 and 284–308; these read KDQDREDARP and PKKE…DRWS. A disordered region spans residues 267-319; it reads KDQDREDARPNRAAYQVPKKEQKEISRGREDEDDHRHEDRWSSGRSTPDQPFQ. Residues 309 to 319 show a composition bias toward polar residues; the sequence is SGRSTPDQPFQ.

In terms of processing, palmitoylated.

It localises to the membrane. Its function is as follows. May play a role in cell-cell recognition and signaling. This Mus musculus (Mouse) protein is Cell surface A33 antigen (Gpa33).